The primary structure comprises 160 residues: Cyclic pyranopterin monophosphate synthase (160 aa).

Substrate is bound by residues 75 to 77 (LCH) and 113 to 114 (ME). Residue Asp128 is part of the active site.

Belongs to the MoaC family. In terms of assembly, homohexamer; trimer of dimers.

The enzyme catalyses (8S)-3',8-cyclo-7,8-dihydroguanosine 5'-triphosphate = cyclic pyranopterin phosphate + diphosphate. It participates in cofactor biosynthesis; molybdopterin biosynthesis. In terms of biological role, catalyzes the conversion of (8S)-3',8-cyclo-7,8-dihydroguanosine 5'-triphosphate to cyclic pyranopterin monophosphate (cPMP). This is Cyclic pyranopterin monophosphate synthase from Ruthia magnifica subsp. Calyptogena magnifica.